Consider the following 420-residue polypeptide: MMQVPGDVQIIKEDNVTHSFCGLACVGWMYQKIKDSFFLILGTHTCAHFLQNALGMMIFAKPRFGIALIEEGDLSKHEPTLEEIISEIKADHNPSVIFLLSSCTPEVMKVDFKGLANQLSTDEVPVLFVPASGLVYNFTQAEDSVLHALVPFCPVAPAGQKNVVFLGSVNDATADDLRAEAEALGIPVGGFLPESRFDKMPAIGPDTVLAPVQPYLSRVAVKLERERGARVLHSLFPFGPDGTRVFWEDLAREFGITVDLRDREKAAWDKIQKQTALLRGKKVFLTADTMMELPLARFLKNAGAEVVECSSAYINKKFHAHELEALQGVRVVEQPNFHRQLEDVTRIQPDLIITSLMTANPFAGHGFVVKWSMEFMLMPIHSWSGVIPLANLFVSPLQRRSKLPAFDKDVWIEGVMPSAE.

3 residues coordinate [4Fe-4S] cluster: Cys-21, Cys-46, and Cys-103.

This sequence belongs to the BchN/ChlN family. As to quaternary structure, protochlorophyllide reductase is composed of three subunits; BchL, BchN and BchB. Forms a heterotetramer of two BchB and two BchN subunits. [4Fe-4S] cluster is required as a cofactor.

It catalyses the reaction chlorophyllide a + oxidized 2[4Fe-4S]-[ferredoxin] + 2 ADP + 2 phosphate = protochlorophyllide a + reduced 2[4Fe-4S]-[ferredoxin] + 2 ATP + 2 H2O. The protein operates within porphyrin-containing compound metabolism; bacteriochlorophyll biosynthesis (light-independent). In terms of biological role, component of the dark-operative protochlorophyllide reductase (DPOR) that uses Mg-ATP and reduced ferredoxin to reduce ring D of protochlorophyllide (Pchlide) to form chlorophyllide a (Chlide). This reaction is light-independent. The NB-protein (BchN-BchB) is the catalytic component of the complex. The sequence is that of Light-independent protochlorophyllide reductase subunit N from Chlorobium phaeobacteroides (strain DSM 266 / SMG 266 / 2430).